A 164-amino-acid chain; its full sequence is Interleukin-31 (164 aa).

Residues M1 to A23 form the signal peptide. Residues N67 and N100 are each glycosylated (N-linked (GlcNAc...) asparagine).

Detected at low levels in testis, bone marrow, skeletal muscle, kidney, colon, thymus, small intestine and trachea.

It localises to the secreted. Its function is as follows. Activates STAT3 and possibly STAT1 and STAT5 through the IL31 heterodimeric receptor composed of IL31RA and OSMR. May function in skin immunity. Enhances myeloid progenitor cell survival in vitro. Induces RETNLA and serum amyloid A protein expression in macrophages. In Homo sapiens (Human), this protein is Interleukin-31 (IL31).